The sequence spans 2512 residues: Fatty acid synthase (2512 aa).

At E2 the chain carries N-acetylglutamate. The region spanning 2 to 406 is the Ketosynthase family 3 (KS3) domain; it reads EDVVIAGIAG…GSNAHVILRP (405 aa). Catalysis depends on for beta-ketoacyl synthase activity residues C161, H293, and H331. Residues 427 to 815 form an acyl and malonyl transferases region; it reads GRTQEAVEIL…GINVLGNNLF (389 aa). The For acyl/malonyl transferase activity role is filled by S580. Residues 646–647, F670, and R772 each bind an acyl-CoA; that span reads DT. The segment at 844 to 967 is N-terminal hotdog fold; it reads PKAEDFPSGS…ISLLENDALK (124 aa). Residues 844–1111 enclose the PKS/mFAS DH domain; sequence PKAEDFPSGS…ASVAPRRQQE (268 aa). H878 functions as the Proton acceptor; for dehydratase activity in the catalytic mechanism. The tract at residues 984–1111 is C-terminal hotdog fold; sequence AKSGLLMEDV…ASVAPRRQQE (128 aa). The active-site Proton donor; for dehydratase activity is the D1034. The residue at position 1475 (C1475) is an S-nitrosocysteine. Residues 1638–1866 are enoyl reductase; that stretch reads WEVPENWTLE…MIKIQEEEKQ (229 aa). Residue 1675–1692 coordinates NADP(+); that stretch reads VLIHSGSGGVGQAAIAIA. K1708 bears the N6-(pyridoxal phosphate)lysine mark. A beta-ketoacyl reductase region spans residues 1867 to 2119; sequence YPLRSEPVKL…SFVLAEKVSV (253 aa). 1889–1904 serves as a coordination point for NADP(+); that stretch reads SYIITGGLGGFGLELA. At C2093 the chain carries S-nitrosocysteine. Residues 2120 to 2200 enclose the Carrier domain; that stretch reads KSEGGSQRDL…ELSSKTGTAE (81 aa). At S2158 the chain carries O-(pantetheine 4'-phosphoryl)serine. The interval 2209–2511 is thioesterase; the sequence is KTGPGEPPKL…LAEPRVSVRE (303 aa). Active-site for thioesterase activity residues include S2309 and H2482.

Homodimer which is arranged in a head to tail fashion. In terms of processing, S-nitrosylation of Fatty acid synthase at cysteine residues Cys-1475 or Cys-2093 is important for the enzyme dimerization. In adipocytes, S-nitrosylation of Fatty acid synthase occurs under physiological conditions and gradually increases during adipogenesis.

It carries out the reaction acetyl-CoA + n malonyl-CoA + 2n NADPH + 2n H(+) = a long-chain fatty acid + (n+1) CoA + n CO2 + 2n NADP(+).. The catalysed reaction is holo-[ACP] + acetyl-CoA = acetyl-[ACP] + CoA. It catalyses the reaction holo-[ACP] + malonyl-CoA = malonyl-[ACP] + CoA. The enzyme catalyses a fatty acyl-[ACP] + malonyl-[ACP] + H(+) = a 3-oxoacyl-[ACP] + holo-[ACP] + CO2. It carries out the reaction a (3R)-hydroxyacyl-[ACP] + NADP(+) = a 3-oxoacyl-[ACP] + NADPH + H(+). The catalysed reaction is a (3R)-hydroxyacyl-[ACP] = a (2E)-enoyl-[ACP] + H2O. It catalyses the reaction a 2,3-saturated acyl-[ACP] + NADP(+) = a (2E)-enoyl-[ACP] + NADPH + H(+). The enzyme catalyses hexadecanoyl-[ACP] + H2O = hexadecanoate + holo-[ACP] + H(+). It carries out the reaction acetyl-[ACP] + malonyl-[ACP] + H(+) = 3-oxobutanoyl-[ACP] + holo-[ACP] + CO2. The catalysed reaction is 3-oxobutanoyl-[ACP] + NADPH + H(+) = (3R)-hydroxybutanoyl-[ACP] + NADP(+). It catalyses the reaction (3R)-hydroxybutanoyl-[ACP] = (2E)-butenoyl-[ACP] + H2O. The enzyme catalyses (2E)-butenoyl-[ACP] + NADPH + H(+) = butanoyl-[ACP] + NADP(+). It carries out the reaction butanoyl-[ACP] + malonyl-[ACP] + H(+) = 3-oxohexanoyl-[ACP] + holo-[ACP] + CO2. The catalysed reaction is 3-oxohexanoyl-[ACP] + NADPH + H(+) = (3R)-hydroxyhexanoyl-[ACP] + NADP(+). It catalyses the reaction (3R)-hydroxyhexanoyl-[ACP] = (2E)-hexenoyl-[ACP] + H2O. The enzyme catalyses (2E)-hexenoyl-[ACP] + NADPH + H(+) = hexanoyl-[ACP] + NADP(+). It carries out the reaction hexanoyl-[ACP] + malonyl-[ACP] + H(+) = 3-oxooctanoyl-[ACP] + holo-[ACP] + CO2. The catalysed reaction is 3-oxooctanoyl-[ACP] + NADPH + H(+) = (3R)-hydroxyoctanoyl-[ACP] + NADP(+). It catalyses the reaction (3R)-hydroxyoctanoyl-[ACP] = (2E)-octenoyl-[ACP] + H2O. The enzyme catalyses (2E)-octenoyl-[ACP] + NADPH + H(+) = octanoyl-[ACP] + NADP(+). It carries out the reaction octanoyl-[ACP] + malonyl-[ACP] + H(+) = 3-oxodecanoyl-[ACP] + holo-[ACP] + CO2. The catalysed reaction is 3-oxodecanoyl-[ACP] + NADPH + H(+) = (3R)-hydroxydecanoyl-[ACP] + NADP(+). It catalyses the reaction (3R)-hydroxydecanoyl-[ACP] = (2E)-decenoyl-[ACP] + H2O. The enzyme catalyses (2E)-decenoyl-[ACP] + NADPH + H(+) = decanoyl-[ACP] + NADP(+). It carries out the reaction decanoyl-[ACP] + malonyl-[ACP] + H(+) = 3-oxododecanoyl-[ACP] + holo-[ACP] + CO2. The catalysed reaction is 3-oxododecanoyl-[ACP] + NADPH + H(+) = (3R)-hydroxydodecanoyl-[ACP] + NADP(+). It catalyses the reaction (3R)-hydroxydodecanoyl-[ACP] = (2E)-dodecenoyl-[ACP] + H2O. The enzyme catalyses (2E)-dodecenoyl-[ACP] + NADPH + H(+) = dodecanoyl-[ACP] + NADP(+). It carries out the reaction dodecanoyl-[ACP] + malonyl-[ACP] + H(+) = 3-oxotetradecanoyl-[ACP] + holo-[ACP] + CO2. The catalysed reaction is 3-oxotetradecanoyl-[ACP] + NADPH + H(+) = (3R)-hydroxytetradecanoyl-[ACP] + NADP(+). It catalyses the reaction (3R)-hydroxytetradecanoyl-[ACP] = (2E)-tetradecenoyl-[ACP] + H2O. The enzyme catalyses (2E)-tetradecenoyl-[ACP] + NADPH + H(+) = tetradecanoyl-[ACP] + NADP(+). It carries out the reaction tetradecanoyl-[ACP] + malonyl-[ACP] + H(+) = 3-oxohexadecanoyl-[ACP] + holo-[ACP] + CO2. The catalysed reaction is 3-oxohexadecanoyl-[ACP] + NADPH + H(+) = (3R)-hydroxyhexadecanoyl-[ACP] + NADP(+). It catalyses the reaction (3R)-hydroxyhexadecanoyl-[ACP] = (2E)-hexadecenoyl-[ACP] + H2O. The enzyme catalyses (2E)-hexadecenoyl-[ACP] + NADPH + H(+) = hexadecanoyl-[ACP] + NADP(+). It carries out the reaction hexadecanoyl-[ACP] + malonyl-[ACP] + H(+) = 3-oxooctadecanoyl-[ACP] + holo-[ACP] + CO2. The catalysed reaction is 3-oxooctadecanoyl-[ACP] + NADPH + H(+) = (3R)-hydroxyoctadecanoyl-[ACP] + NADP(+). It catalyses the reaction (3R)-hydroxyoctadecanoyl-[ACP] = (2E)-octadecenoyl-[ACP] + H2O. The enzyme catalyses (2E)-octadecenoyl-[ACP] + NADPH + H(+) = octadecanoyl-[ACP] + NADP(+). It carries out the reaction tetradecanoyl-[ACP] + H2O = tetradecanoate + holo-[ACP] + H(+). The catalysed reaction is octadecanoyl-[ACP] + H2O = octadecanoate + holo-[ACP] + H(+). It functions in the pathway lipid metabolism; fatty acid biosynthesis. Cerulenin, a potent non-competitive pharmacological inhibitor of FAS, binds covalently to the active site of the condensing enzyme region, inactivating a key enzyme step in fatty acid synthesis. In terms of biological role, fatty acid synthetase is a multifunctional enzyme that catalyzes the de novo biosynthesis of long-chain saturated fatty acids starting from acetyl-CoA and malonyl-CoA in the presence of NADPH. This multifunctional protein contains 7 catalytic activities and a site for the binding of the prosthetic group 4'-phosphopantetheine of the acyl carrier protein ([ACP]) domain. In Gallus gallus (Chicken), this protein is Fatty acid synthase (FASN).